The primary structure comprises 877 residues: Phosphoenolpyruvate carboxylase (877 aa).

Active-site residues include His138 and Lys544.

The protein belongs to the PEPCase type 1 family. Requires Mg(2+) as cofactor.

It carries out the reaction oxaloacetate + phosphate = phosphoenolpyruvate + hydrogencarbonate. In terms of biological role, forms oxaloacetate, a four-carbon dicarboxylic acid source for the tricarboxylic acid cycle. This is Phosphoenolpyruvate carboxylase from Vibrio vulnificus (strain CMCP6).